The primary structure comprises 843 residues: Elongation factor 2 (843 aa).

In terms of domain architecture, tr-type G spans 17 to 344 (HNIRNMSVIA…MMIFHLPSPH (328 aa)). GTP-binding positions include 26–33 (AHVDHGKS) and 158–161 (NKMD). H700 carries the diphthamide modification. S837 is modified (phosphoserine).

Belongs to the TRAFAC class translation factor GTPase superfamily. Classic translation factor GTPase family. In terms of assembly, may interact with glutaredoxins (Grxs). Expressed in root, stem, leaves, flowers and siliques.

It localises to the cytoplasm. The catalysed reaction is GTP + H2O = GDP + phosphate + H(+). Its pathway is protein biosynthesis; polypeptide chain elongation. In terms of biological role, catalyzes the GTP-dependent ribosomal translocation step during translation elongation. During this step, the ribosome changes from the pre-translocational (PRE) to the post-translocational (POST) state as the newly formed A-site-bound peptidyl-tRNA and P-site-bound deacylated tRNA move to the P and E sites, respectively. Catalyzes the coordinated movement of the two tRNA molecules, the mRNA and conformational changes in the ribosome. Involved in cold responses leading to freezing tolerance via the induction of cold-responsive genes. The chain is Elongation factor 2 from Arabidopsis thaliana (Mouse-ear cress).